The following is a 1216-amino-acid chain: Sodium/potassium/calcium exchanger 1 (1216 aa).

Topologically, residues 1 to 446 (MGKLIRMGAQ…DLFSVEERRQ (446 aa)) are extracellular. Residues 94–196 (EATAGRDGTP…KYSPSPLGRM (103 aa)) are disordered. Composition is skewed to polar residues over residues 110–135 (NTPS…TPTG) and 144–166 (SATP…SYTR). 2 N-linked (GlcNAc...) asparagine glycosylation sites follow: Asn290 and Asn303. The helical transmembrane segment at 447–467 (GWVVLHIFGMMYVFVALAIVC) threads the bilayer. The Cytoplasmic portion of the chain corresponds to 468-491 (DEYFVPALGVITDKLQISEDVAGA). The stretch at 488 to 528 (VAGATFMAAGGSAPELFTSLIGVFISHSNVGIGTIVGSAVF) is one Alpha-1 repeat. Residues 492–512 (TFMAAGGSAPELFTSLIGVFI) form a helical membrane-spanning segment. At 513-518 (SHSNVG) the chain is on the extracellular side. Residues 519 to 539 (IGTIVGSAVFNILFVIGTCAL) traverse the membrane as a helical segment. Over 540–557 (FSREILNLTWWPLFRDIT) the chain is Cytoplasmic. The chain crosses the membrane as a helical span at residues 558–578 (FYIFDLMMLILFFLDSLIAWW). Residue Glu579 is a topological domain, extracellular. A helical transmembrane segment spans residues 580–600 (SVLLLLAYAFYVFTMKWNQQL). The Cytoplasmic portion of the chain corresponds to 601–1024 (ELWVKEQLNK…SLEWPETRRK (424 aa)). At Ser652 the chain carries Phosphoserine. Positions 677 to 1018 (GEARPSKDKE…ENEQPLSLEW (342 aa)) are disordered. The span at 702–712 (AESKPEEEPAK) shows a compositional bias: basic and acidic residues. Thr717 bears the Phosphothreonine mark. A 1; approximate repeat occupies 796-811 (DEDEGEIQAEGGEVKG). The segment at 796–928 (DEDEGEIQAE…QAGEAGEVEG (133 aa)) is 8 X 17 AA tandem repeats of D-E-D-E-G-E-I-Q-A-G-E-[GA]-G-E-V-[EK]-G. Tandem repeats lie at residues 812–828 (DEDE…EVEG), 829–845 (DEDE…EVEG), 846–862 (DEDE…EVEG), 863–879 (DEDE…EVEG), 880–896 (DEDE…EVEG), and 897–913 (DEDE…EVKG). Composition is skewed to acidic residues over residues 824-834 (GEVEGDEDEGE), 841-851 (GEVEGDEDEGE), 858-868 (GEVEGDEDEGE), 875-885 (GEVEGDEDEGE), 892-902 (GEVEGDEDEGE), 924-941 (GEVE…DEGE), and 981-1011 (GDSE…EENE). An 8; approximate repeat occupies 914–928 (DEGEIQAGEAGEVEG). The chain crosses the membrane as a helical span at residues 1025–1045 (QAIYLFLLPIVFPLWLTVPDV). Over 1046 to 1052 (RRLEAKK) the chain is Extracellular. The chain crosses the membrane as a helical span at residues 1053–1073 (FFVITFLGSILWIAMFSYLMV). Residues 1074-1088 (WWAHQVGETIGISEE) are Cytoplasmic-facing. The chain crosses the membrane as a helical span at residues 1089 to 1109 (IMGLTILAAGTSIPDLITSVI). An Alpha-2 repeat occupies 1096–1127 (AAGTSIPDLITSVIVARKGLGDMAVSSSVGSN). Topologically, residues 1110-1127 (VARKGLGDMAVSSSVGSN) are extracellular. Residues 1128–1148 (IFDITVGLPLPWMLFSLINGL) form a helical membrane-spanning segment. At 1149–1157 (QPVAVSSNG) the chain is on the cytoplasmic side. Residues 1158–1178 (LFCAIVLLFLMLLFVISSIAL) form a helical membrane-spanning segment. The Extracellular portion of the chain corresponds to 1179-1185 (CKWRMNK). Residues 1186-1206 (ILGFTMFLLYFVFLIISVMLE) form a helical membrane-spanning segment. The Cytoplasmic segment spans residues 1207-1216 (DRIISCPVSV).

It belongs to the Ca(2+):cation antiporter (CaCA) (TC 2.A.19) family. SLC24A subfamily. Post-translationally, the uncleaved signal sequence is required for efficient membrane targeting and proper membrane integration and topology. Glycosylated. Retina.

It is found in the cell membrane. It catalyses the reaction Ca(2+)(out) + K(+)(out) + 4 Na(+)(in) = Ca(2+)(in) + K(+)(in) + 4 Na(+)(out). In terms of biological role, calcium, potassium:sodium antiporter that transports 1 Ca(2+) and 1 K(+) in exchange for 4 Na(+). Critical component of the visual transduction cascade, controlling the calcium concentration of outer segments during light and darkness. Light causes a rapid lowering of cytosolic free calcium in the outer segment of both retinal rod and cone photoreceptors and the light-induced lowering of calcium is caused by extrusion via this protein which plays a key role in the process of light adaptation. The protein is Sodium/potassium/calcium exchanger 1 (SLC24A1) of Bos taurus (Bovine).